A 399-amino-acid polypeptide reads, in one-letter code: Elongation factor Tu (399 aa).

In terms of domain architecture, tr-type G spans 10 to 204; it reads KPHVNIGTIG…AVDASIPEPE (195 aa). Positions 19–26 are G1; sequence GHVDHGKT. 19 to 26 lines the GTP pocket; it reads GHVDHGKT. Thr26 is a binding site for Mg(2+). Residues 60 to 64 form a G2 region; sequence GITIN. The tract at residues 81 to 84 is G3; the sequence is DCPG. GTP-binding positions include 81 to 85 and 136 to 139; these read DCPGH and NKCD. A G4 region spans residues 136 to 139; it reads NKCD. The segment at 174-176 is G5; the sequence is SGL.

This sequence belongs to the TRAFAC class translation factor GTPase superfamily. Classic translation factor GTPase family. EF-Tu/EF-1A subfamily. As to quaternary structure, monomer.

The protein resides in the cytoplasm. The catalysed reaction is GTP + H2O = GDP + phosphate + H(+). In terms of biological role, GTP hydrolase that promotes the GTP-dependent binding of aminoacyl-tRNA to the A-site of ribosomes during protein biosynthesis. In Prochlorococcus marinus (strain AS9601), this protein is Elongation factor Tu.